Reading from the N-terminus, the 251-residue chain is Flap endonuclease Xni (251 aa).

Asp-104 is a binding site for Mg(2+). Positions 160 to 249 (VQPQQLPDYW…IDGNLQQLRL (90 aa)) constitute a 5'-3' exonuclease domain. Leu-171, Ala-172, Pro-180, Val-182, and Ile-185 together coordinate K(+). The segment at 184 to 189 (GIGPKS) is interaction with DNA.

This sequence belongs to the Xni family. The cofactor is Mg(2+). It depends on K(+) as a cofactor.

Its function is as follows. Has flap endonuclease activity. During DNA replication, flap endonucleases cleave the 5'-overhanging flap structure that is generated by displacement synthesis when DNA polymerase encounters the 5'-end of a downstream Okazaki fragment. This chain is Flap endonuclease Xni, found in Escherichia coli O45:K1 (strain S88 / ExPEC).